The sequence spans 143 residues: Nucleoside diphosphate kinase (143 aa).

ATP-binding residues include lysine 11, phenylalanine 59, arginine 87, threonine 93, arginine 104, and asparagine 114. The Pros-phosphohistidine intermediate role is filled by histidine 117.

This sequence belongs to the NDK family. Homotetramer. The cofactor is Mg(2+).

Its subcellular location is the cytoplasm. The catalysed reaction is a 2'-deoxyribonucleoside 5'-diphosphate + ATP = a 2'-deoxyribonucleoside 5'-triphosphate + ADP. It carries out the reaction a ribonucleoside 5'-diphosphate + ATP = a ribonucleoside 5'-triphosphate + ADP. Its function is as follows. Major role in the synthesis of nucleoside triphosphates other than ATP. The ATP gamma phosphate is transferred to the NDP beta phosphate via a ping-pong mechanism, using a phosphorylated active-site intermediate. This is Nucleoside diphosphate kinase from Cronobacter sakazakii (strain ATCC BAA-894) (Enterobacter sakazakii).